The following is a 395-amino-acid chain: S-adenosylmethionine synthase (395 aa).

His14 serves as a coordination point for ATP. Asp16 lines the Mg(2+) pocket. A K(+)-binding site is contributed by Glu42. Residues Glu55 and Gln98 each coordinate L-methionine. A flexible loop region spans residues 98-108 (QSPDIAMGVDK). ATP-binding positions include 175–177 (DGK), 242–243 (RF), Asp251, 257–258 (RK), Ala274, and Lys278. L-methionine is bound at residue Asp251. Residue Lys282 coordinates L-methionine.

Belongs to the AdoMet synthase family. Homotetramer; dimer of dimers. The cofactor is Mg(2+). K(+) serves as cofactor.

The protein resides in the cytoplasm. It carries out the reaction L-methionine + ATP + H2O = S-adenosyl-L-methionine + phosphate + diphosphate. The protein operates within amino-acid biosynthesis; S-adenosyl-L-methionine biosynthesis; S-adenosyl-L-methionine from L-methionine: step 1/1. Functionally, catalyzes the formation of S-adenosylmethionine (AdoMet) from methionine and ATP. The overall synthetic reaction is composed of two sequential steps, AdoMet formation and the subsequent tripolyphosphate hydrolysis which occurs prior to release of AdoMet from the enzyme. The polypeptide is S-adenosylmethionine synthase (Thermosipho melanesiensis (strain DSM 12029 / CIP 104789 / BI429)).